We begin with the raw amino-acid sequence, 1259 residues long: Telomerase reverse transcriptase (1259 aa).

Residues 742-1067 form the Reverse transcriptase domain; it reads RGEPRKAVRH…SFMPWSGLLI (326 aa). Residues aspartate 837, aspartate 999, and aspartate 1000 each coordinate Mg(2+).

It belongs to the reverse transcriptase family. Telomerase subfamily. As to quaternary structure, component of the telomerase ribonucleoprotein complex. Expressed in shoot apices and immature embryos.

The protein resides in the nucleus. It is found in the chromosome. Its subcellular location is the telomere. It catalyses the reaction DNA(n) + a 2'-deoxyribonucleoside 5'-triphosphate = DNA(n+1) + diphosphate. Functionally, telomerase is a ribonucleoprotein enzyme essential for the replication of chromosome termini in most eukaryotes. It elongates telomeres. It is a reverse transcriptase that adds simple sequence repeats to chromosome ends by copying a template sequence within the RNA component of the enzyme. The polypeptide is Telomerase reverse transcriptase (TERT) (Oryza sativa subsp. japonica (Rice)).